Consider the following 1387-residue polypeptide: DNA-directed RNA polymerase subunit beta'' (1387 aa).

4 residues coordinate Zn(2+): C224, C295, C302, and C305.

Belongs to the RNA polymerase beta' chain family. RpoC2 subfamily. In terms of assembly, in plastids the minimal PEP RNA polymerase catalytic core is composed of four subunits: alpha, beta, beta', and beta''. When a (nuclear-encoded) sigma factor is associated with the core the holoenzyme is formed, which can initiate transcription. Zn(2+) is required as a cofactor.

The protein resides in the plastid. It localises to the chloroplast. It carries out the reaction RNA(n) + a ribonucleoside 5'-triphosphate = RNA(n+1) + diphosphate. Functionally, DNA-dependent RNA polymerase catalyzes the transcription of DNA into RNA using the four ribonucleoside triphosphates as substrates. The sequence is that of DNA-directed RNA polymerase subunit beta'' from Panax ginseng (Korean ginseng).